Consider the following 573-residue polypeptide: Sulfate adenylyltransferase (573 aa).

The tract at residues 1-169 is N-terminal; sequence MANPPHGGIL…VEAVNKLNHY (169 aa). Residues 170 to 394 are catalytic; it reads DYVGLRFTPA…LRESNPPRSK (225 aa). Gln197 is a binding site for sulfate. Residues 197-200 and 291-294 contribute to the ATP site; these read QTRN and GRDH. Catalysis depends on residues Thr198, Arg199, and Asn200. Sulfate is bound at residue Arg199. Ala295 is a binding site for sulfate. Residue Leu333 participates in ATP binding. The segment at 395–573 is allosteric regulation domain; adenylyl-sulfate kinase-like; that stretch reads QGFTVFLTGY…LESQGFLEKA (179 aa). 3'-phosphoadenylyl sulfate contacts are provided by residues 434–437, Arg451, 477–478, and Arg515; these read DTVR and IA.

The protein in the N-terminal section; belongs to the sulfate adenylyltransferase family. It in the C-terminal section; belongs to the APS kinase family. As to quaternary structure, homohexamer. Dimer of trimers.

It is found in the cytoplasm. It catalyses the reaction sulfate + ATP + H(+) = adenosine 5'-phosphosulfate + diphosphate. It participates in sulfur metabolism; hydrogen sulfide biosynthesis; sulfite from sulfate: step 1/3. Its activity is regulated as follows. Allosterically inhibited by 3'-phosphoadenosine 5'-phosphosulfate (PAPS). Functionally, catalyzes the first intracellular reaction of sulfate assimilation, forming adenosine-5'-phosphosulfate (APS) from inorganic sulfate and ATP. Plays an important role in sulfate activation as a component of the biosynthesis pathway of sulfur-containing amino acids. The polypeptide is Sulfate adenylyltransferase (Coccidioides immitis (strain RS) (Valley fever fungus)).